We begin with the raw amino-acid sequence, 275 residues long: tRNA pseudouridine synthase A (275 aa).

D60 serves as the catalytic Nucleophile. Y119 is a substrate binding site.

The protein belongs to the tRNA pseudouridine synthase TruA family. Homodimer.

It catalyses the reaction uridine(38/39/40) in tRNA = pseudouridine(38/39/40) in tRNA. Formation of pseudouridine at positions 38, 39 and 40 in the anticodon stem and loop of transfer RNAs. The polypeptide is tRNA pseudouridine synthase A (Synechocystis sp. (strain ATCC 27184 / PCC 6803 / Kazusa)).